The sequence spans 555 residues: Protection of telomeres protein 1 (555 aa).

Belongs to the telombin family. Self-associates. Interacts with ccq1, poz1 and tpz1.

It localises to the nucleus. The protein localises to the chromosome. It is found in the telomere. Functionally, single-stranded telomeric DNA-binding protein that is required to protect the 3'-end telomeric overhang. It binds the consensus sequence 5'-GGTTAC-3'. Regulates telomerase and telomere length. This is Protection of telomeres protein 1 (pot1) from Schizosaccharomyces pombe (strain 972 / ATCC 24843) (Fission yeast).